Here is a 229-residue protein sequence, read N- to C-terminus: Uracil-DNA glycosylase (229 aa).

Catalysis depends on D65, which acts as the Proton acceptor.

The protein belongs to the uracil-DNA glycosylase (UDG) superfamily. UNG family.

It localises to the cytoplasm. It carries out the reaction Hydrolyzes single-stranded DNA or mismatched double-stranded DNA and polynucleotides, releasing free uracil.. Its function is as follows. Excises uracil residues from the DNA which can arise as a result of misincorporation of dUMP residues by DNA polymerase or due to deamination of cytosine. In Limosilactobacillus fermentum (strain NBRC 3956 / LMG 18251) (Lactobacillus fermentum), this protein is Uracil-DNA glycosylase.